A 490-amino-acid chain; its full sequence is MPAVQLLLLAGLVWGAGARTAQLRKANDRSGRCQYTFSVASPSESSCPEQGQTMSAIQDLQRDSSTQRADLESTKARLSSLESLLHRLTLAQTSGPQEIQEELQKELGTLRRERDQLESQTRELEAAYSNLLRDKSALEEEKRRLMQENEDLARRLESSSQEVARLARGQCPQARDTSQDVPAGSREASQWNLDTLAFQELKSELTEVPASRILKENPPVLPRGEEGDNGCGELVWVGQPVTLRTAETITGKYGVWMRDPKPTSPHTQETTWRIDTVGTDIRQVFEYDRISQFVQGYPSKVYVLPRSLESTGAVVYAGSLYFQGAGSRTVIRFELNTETVKAEKEIPGAGYRGQFPYSWGGYTDIDLAVDETGLWVIYSTEEARGAIVLSKLNPENLELEKTWETNIRKQSVANAFIICGTLYTVSSYSSADATVNFAYDTGTGISKPLAIPFKNRYKYSSMIDYNPLERKLFAWDSFNMVTYDIKLSKI.

The N-terminal stretch at 1–18 is a signal peptide; that stretch reads MPAVQLLLLAGLVWGAGA. The stretch at 55–170 forms a coiled coil; it reads SAIQDLQRDS…QEVARLARGQ (116 aa). The tract at residues 168–187 is disordered; the sequence is RGQCPQARDTSQDVPAGSRE. The Olfactomedin-like domain maps to 230–489; sequence GCGELVWVGQ…MVTYDIKLSK (260 aa). Cysteine 231 and cysteine 419 are joined by a disulfide. Residues aspartate 366, asparagine 414, alanine 415, isoleucine 463, and aspartate 464 each contribute to the Ca(2+) site. The Microbody targeting signal motif lies at 488–490; sequence SKI.

In terms of assembly, homodimer (via N-terminus). Can also form higher oligomers. Interacts with OLFM3, FN1, NRCAM, GLDN and NFASC. Interacts (via N-terminus) with MYL2. Interacts with SFRP1, FRZB, FZD7, FZD10, FZD1 and WIF1; regulates Wnt signaling. Interacts with SNTA1; regulates muscle hypertrophy. Interacts with ERBB2 and ERBB3; activates ERBB2-ERBB3 signaling pathway. Interacts with SNCG; affects its secretion and its aggregation. In terms of processing, palmitoylated. Post-translationally, glycosylated. Undergoes a calcium-dependent proteolytic cleavage at Arg-212 by CAPN2 in the endoplasmic reticulum. The result is the production of two fragments, one of 35 kDa containing the C-terminal olfactomedin-like domain, and another of 20 kDa containing the N-terminal leucine zipper-like domain. In terms of tissue distribution, detected in eye aqueous humor (at protein level).

It localises to the secreted. The protein resides in the golgi apparatus. The protein localises to the cytoplasmic vesicle. It is found in the extracellular space. Its subcellular location is the extracellular matrix. It localises to the extracellular exosome. The protein resides in the mitochondrion. The protein localises to the mitochondrion intermembrane space. It is found in the mitochondrion inner membrane. Its subcellular location is the mitochondrion outer membrane. It localises to the rough endoplasmic reticulum. The protein resides in the cell projection. The protein localises to the cilium. It is found in the endoplasmic reticulum. Secreted glycoprotein regulating the activation of different signaling pathways in adjacent cells to control different processes including cell adhesion, cell-matrix adhesion, cytoskeleton organization and cell migration. Promotes substrate adhesion, spreading and formation of focal contacts. Negatively regulates cell-matrix adhesion and stress fiber assembly through Rho protein signal transduction. Modulates the organization of actin cytoskeleton by stimulating the formation of stress fibers through interactions with components of Wnt signaling pathways. Promotes cell migration through activation of PTK2 and the downstream phosphatidylinositol 3-kinase signaling. Plays a role in bone formation and promotes osteoblast differentiation in a dose-dependent manner through mitogen-activated protein kinase signaling. Mediates myelination in the peripheral nervous system through ERBB2/ERBB3 signaling. Plays a role as a regulator of muscle hypertrophy through the components of dystrophin-associated protein complex. Involved in positive regulation of mitochondrial depolarization. Plays a role in neurite outgrowth. May participate in the obstruction of fluid outflow in the trabecular meshwork. The polypeptide is Myocilin (Oryctolagus cuniculus (Rabbit)).